The following is a 415-amino-acid chain: 4-hydroxy-3-methylbut-2-enyl diphosphate reductase (415 aa).

Position 66 (C66) interacts with [4Fe-4S] cluster. H96 lines the (2E)-4-hydroxy-3-methylbut-2-enyl diphosphate pocket. H96 lines the dimethylallyl diphosphate pocket. Position 96 (H96) interacts with isopentenyl diphosphate. Residue C158 coordinates [4Fe-4S] cluster. H186 serves as a coordination point for (2E)-4-hydroxy-3-methylbut-2-enyl diphosphate. H186 is a binding site for dimethylallyl diphosphate. H186 serves as a coordination point for isopentenyl diphosphate. The Proton donor role is filled by E188. T259 is a binding site for (2E)-4-hydroxy-3-methylbut-2-enyl diphosphate. C297 serves as a coordination point for [4Fe-4S] cluster. S326, S327, N328, and S388 together coordinate (2E)-4-hydroxy-3-methylbut-2-enyl diphosphate. 4 residues coordinate dimethylallyl diphosphate: S326, S327, N328, and S388. The isopentenyl diphosphate site is built by S326, S327, N328, and S388.

It belongs to the IspH family. It depends on [4Fe-4S] cluster as a cofactor.

The enzyme catalyses isopentenyl diphosphate + 2 oxidized [2Fe-2S]-[ferredoxin] + H2O = (2E)-4-hydroxy-3-methylbut-2-enyl diphosphate + 2 reduced [2Fe-2S]-[ferredoxin] + 2 H(+). It carries out the reaction dimethylallyl diphosphate + 2 oxidized [2Fe-2S]-[ferredoxin] + H2O = (2E)-4-hydroxy-3-methylbut-2-enyl diphosphate + 2 reduced [2Fe-2S]-[ferredoxin] + 2 H(+). Its pathway is isoprenoid biosynthesis; dimethylallyl diphosphate biosynthesis; dimethylallyl diphosphate from (2E)-4-hydroxy-3-methylbutenyl diphosphate: step 1/1. The protein operates within isoprenoid biosynthesis; isopentenyl diphosphate biosynthesis via DXP pathway; isopentenyl diphosphate from 1-deoxy-D-xylulose 5-phosphate: step 6/6. Functionally, catalyzes the conversion of 1-hydroxy-2-methyl-2-(E)-butenyl 4-diphosphate (HMBPP) into a mixture of isopentenyl diphosphate (IPP) and dimethylallyl diphosphate (DMAPP). Acts in the terminal step of the DOXP/MEP pathway for isoprenoid precursor biosynthesis. This chain is 4-hydroxy-3-methylbut-2-enyl diphosphate reductase, found in Acaryochloris marina (strain MBIC 11017).